A 570-amino-acid polypeptide reads, in one-letter code: NADPH oxidase 2 (570 aa).

The Cytoplasmic segment spans residues 2-9; that stretch reads GNWVVNEG. A helical membrane pass occupies residues 10–36; the sequence is ISIFVILVWLGMNVFLFVWYYRVYDIP. Residues 37-46 lie on the Extracellular side of the membrane; that stretch reads DKFFYTRKLL. Residues 47–72 traverse the membrane as a helical segment; the sequence is GSALALARAPAACLNFNCMLILLPVC. The Ferric oxidoreductase domain maps to 54–286; the sequence is RAPAACLNFN…MFLYLCERLV (233 aa). Topologically, residues 73 to 95 are cytoplasmic; that stretch reads RNLLSFLRGSSACCSTRIRRQLD. Residues 96-130 form a helical membrane-spanning segment; it reads RNLTFHKMVAWMIALHTAIHTIAHLFNVEWCVNAR. Residues His-101 and His-115 each contribute to the heme b site. The Extracellular portion of the chain corresponds to 131–163; it reads VNNSDPYSIALSDIGDKPNETYLNFVRQRIKNP. N-linked (GlcNAc...) asparagine glycans are attached at residues Asn-132 and Asn-149. Lys-161 participates in a covalent cross-link: Glycyl lysine isopeptide (Lys-Gly) (interchain with G-Cter in ubiquitin). A helical membrane pass occupies residues 164–194; the sequence is EGGLYVAVTRLAGITGVVITLCLILIITSST. Topologically, residues 195-203 are cytoplasmic; the sequence is KTIRRSYFE. Residues Arg-199 and Ser-200 each coordinate FAD. Residues 204–222 traverse the membrane as a helical segment; sequence VFWYTHHLFVIFFIGLAIH. The heme b site is built by Trp-206, His-209, His-222, Arg-226, and Ile-227. Topologically, residues 223-267 are extracellular; it reads GAQRIVRGQTAESLLKHQPRNCYQNISQWGKIENCPIPEFSGNPP. The N-linked (GlcNAc...) asparagine glycan is linked to Asn-247. 3 residues coordinate heme b: Met-268, Tyr-280, and Arg-287. The helical transmembrane segment at 268 to 285 threads the bilayer; it reads MTWKWIVGPMFLYLCERL. The Cytoplasmic segment spans residues 286–570; that stretch reads VRFWRSQQKV…VHFIFNKENF (285 aa). An FAD-binding FR-type domain is found at 287–397; sequence RFWRSQQKVV…DGPFGTASED (111 aa). Glycyl lysine isopeptide (Lys-Gly) (interchain with G-Cter in ubiquitin) cross-links involve residues Lys-294, Lys-299, Lys-306, Lys-328, and Lys-334. Residues Trp-337, His-338, Pro-339, Thr-341, His-354, Arg-356, Trp-361, and Thr-362 each coordinate FAD. A Glycyl lysine isopeptide (Lys-Gly) (interchain with G-Cter in ubiquitin) cross-link involves residue Lys-381. NADPH-binding residues include Ile-411, Arg-446, and Thr-481. A Glycyl lysine isopeptide (Lys-Gly) (interchain with G-Cter in ubiquitin) cross-link involves residue Lys-506. Arg-513 is a binding site for NADPH. Lys-567 participates in a covalent cross-link: Glycyl lysine isopeptide (Lys-Gly) (interchain with G-Cter in ubiquitin).

Component of the phagocyte NADPH oxidase core complex/cytochrome b558 complex, composed of CYBB (heavy chain (beta)) and CYBA (light chain (alpha)). Component of the phagocyte NADPH oxidase complex composed of an obligatory core heterodimer formed by the membrane proteins CYBA and CYBB and the cytosolic regulatory subunits NCF1/p47-phox, NCF2/p67-phox, NCF4/p40-phox and the small GTPase RAC1 or RAC2. Interacts with NCF1 (phosphorylated form). Interacts with NCF2; the interaction is enhanced in the presence of GBP7. Interacts with RAC2. Interacts with RAC1. Interacts with calprotectin (S100A8/9). Interacts with NRROS; the interaction is direct and impairs formation of a stable NADPH oxidase complex. Interacts with CYBC1; CYBC1 may act as a chaperone stabilizing Cytochrome b-245 heterodimer. The CYBA-CYBB complex interacts with GBP7. FAD serves as cofactor. Glycosylated. Post-translationally, phosphorylated on Ser and Thr residues by PKC during neutrophils activation. Phosphorylation enhances the NADPH oxidase activity and stimulates its interaction with RAC2, NCF2/p67-phox, and NCF1/p47-phox. In terms of processing, undergoes 'Lys-48'-linked polyubiquitination, likely by RNF145, triggering endoplasmic reticulum-associated degradation.

It localises to the cell membrane. The catalysed reaction is NADPH + 2 O2 = 2 superoxide + NADP(+) + H(+). Its function is as follows. Catalytic subunit of the phagocyte NADPH oxidase complex that mediates the transfer of electrons from cytosolic NADPH to O2 to produce the superoxide anion (O2(-)). In the activated complex, electrons are first transferred from NADPH to flavin adenine dinucleotide (FAD) and subsequently transferred via two heme molecules to molecular oxygen, producing superoxide through an outer-sphere reaction. Activation of the NADPH oxidase complex is initiated by the assembly of cytosolic subunits of the NADPH oxidase complex with the core NADPH oxidase complex to form a complex at the plasma membrane or phagosomal membrane. This activation process is initiated by phosphorylation dependent binding of the cytosolic NCF1/p47-phox subunit to the C-terminus of CYBA/p22-phox. NADPH oxidase complex assembly is impaired through interaction with NRROS. This chain is NADPH oxidase 2, found in Bos taurus (Bovine).